Reading from the N-terminus, the 200-residue chain is 3-isopropylmalate dehydratase small subunit (200 aa).

It belongs to the LeuD family. LeuD type 1 subfamily. As to quaternary structure, heterodimer of LeuC and LeuD.

The enzyme catalyses (2R,3S)-3-isopropylmalate = (2S)-2-isopropylmalate. Its pathway is amino-acid biosynthesis; L-leucine biosynthesis; L-leucine from 3-methyl-2-oxobutanoate: step 2/4. In terms of biological role, catalyzes the isomerization between 2-isopropylmalate and 3-isopropylmalate, via the formation of 2-isopropylmaleate. The sequence is that of 3-isopropylmalate dehydratase small subunit from Edwardsiella ictaluri (strain 93-146).